The sequence spans 107 residues: Wound-induced proteinase inhibitor 1 (107 aa).

The N-terminal stretch at 1 to 23 (MESKFAHIIVFFLLATSFETLLA) is a signal peptide. A propeptide spanning residues 24-36 (RKESDGPEVIELQ) is cleaved from the precursor.

Belongs to the protease inhibitor I13 (potato type I serine protease inhibitor) family. In terms of assembly, heterogeneous tetramers of similar chains.

Inhibits both chymotrypsin and trypsin. This Solanum tuberosum (Potato) protein is Wound-induced proteinase inhibitor 1.